Reading from the N-terminus, the 832-residue chain is MPLSYQHFRRLLLLDDEAGPLEEELPRLADEGLNRRVAEDLNLGNLNVSIPWTHKVGNFTGFYSSTVPVFNPHWETPSFPNIHLHQDIIKKCEQFVGPLTVNEKRRLQLIMPARFYPKVTKYLPLDKGIKPYYPEHLVNHYFQTRHYLHTLWKAGILYKRETTHSASFCGSPYSWEQDLQHGAESIHQQSSGILSRPPVGSSLQSKHRKSRLGLQSQQGHLARRQQGWSWSIRAGTHPTARRPFGVEPSGSGHTTHRASKSASCLYQSPDRKATYPSVSTFERHSSSGRAVELHNFPPNSARSQSERPIFPCWWLQFRNSKPCSDYCLSLIVNLLEDWGPCDEYGEHHIRIPRTPARVTGGVFLVDKNPHNTAESRLVVDFSQFSRGNYRVSWPKFAVPNLQSLTNLLSSNLSWLSLDVSAGFYHLPLHPAAMPHLLVGSSGVSRYVARLSSNSRNNNNQYGTMQNLHDSCSRQLYVSLMLLYQNFGWKLHLYSHPIVLGFRKIPMGVGLSPFLLAQFTSAICSVVRRAFPHCLAFSYMDDVVLGAKSVQHLESLFTAVTNFLLSLGIHLNPNKTKRWGYSLHFMGYVIGCYGSLPQEHIIQKIKECFRKVPVNRPIDWKVCQRIVGLLGFAAPFTQCGYPALMPLYACIQFKQAFTFSPTYKAFLCKQYLNLYPVARQRPGLCQVFADATPTGWGLGMGHQRMRGTFSAPLPIHTAELLAACFARSRSGANILGTDNSVVLSRKYTSFPWLLGCAANWILRGTSFVYVPSALNPADDPSRGRLGLSRPLLCLPFRPTTGRTSLYADSPSVPSHLPDRVHFASPLHVAWRPP.

A terminal protein domain (TP) region spans residues 1 to 177; sequence MPLSYQHFRR…FCGSPYSWEQ (177 aa). The spacer stretch occupies residues 178 to 335; that stretch reads DLQHGAESIH…YCLSLIVNLL (158 aa). Disordered regions lie at residues 186-218 and 239-266; these read IHQQ…QSQQ and TARR…SCLY. The interval 336 to 679 is polymerase/reverse transcriptase domain (RT); it reads EDWGPCDEYG…YLNLYPVARQ (344 aa). Residues 346-589 enclose the Reverse transcriptase domain; sequence EHHIRIPRTP…YSLHFMGYVI (244 aa). Residues D418, D540, and D541 each contribute to the Mg(2+) site.

The protein belongs to the hepadnaviridae P protein family.

The enzyme catalyses DNA(n) + a 2'-deoxyribonucleoside 5'-triphosphate = DNA(n+1) + diphosphate. The catalysed reaction is Endonucleolytic cleavage to 5'-phosphomonoester.. With respect to regulation, activated by host HSP70 and HSP40 in vitro to be able to bind the epsilon loop of the pgRNA. Because deletion of the RNase H region renders the protein partly chaperone-independent, the chaperones may be needed indirectly to relieve occlusion of the RNA-binding site by this domain. Inhibited by several reverse-transcriptase inhibitors: Lamivudine, Adefovir and Entecavir. In terms of biological role, multifunctional enzyme that converts the viral RNA genome into dsDNA in viral cytoplasmic capsids. This enzyme displays a DNA polymerase activity that can copy either DNA or RNA templates, and a ribonuclease H (RNase H) activity that cleaves the RNA strand of RNA-DNA heteroduplexes in a partially processive 3'- to 5'-endonucleasic mode. Neo-synthesized pregenomic RNA (pgRNA) are encapsidated together with the P protein, and reverse-transcribed inside the nucleocapsid. Initiation of reverse-transcription occurs first by binding the epsilon loop on the pgRNA genome, and is initiated by protein priming, thereby the 5'-end of (-)DNA is covalently linked to P protein. Partial (+)DNA is synthesized from the (-)DNA template and generates the relaxed circular DNA (RC-DNA) genome. After budding and infection, the RC-DNA migrates in the nucleus, and is converted into a plasmid-like covalently closed circular DNA (cccDNA). The activity of P protein does not seem to be necessary for cccDNA generation, and is presumably released from (+)DNA by host nuclear DNA repair machinery. This chain is Protein P, found in Homo sapiens (Human).